A 132-amino-acid polypeptide reads, in one-letter code: Putative RNase AF_0947 (132 aa).

Active-site residues include arginine 91 and histidine 96. The RX(4)HXY motif motif lies at 91–98 (RNAIAHHY). An O-di-AMP-tyrosine modification is found at tyrosine 98.

The protein belongs to the HepT RNase toxin family. Homodimer, probably forms a complex with cognate antitoxin AF_0948. Modified by cognate antitoxin AF_0948; probably at least 2 successive AMPylation events occur on Tyr-98.

Probable toxic component of a putative type VII toxin-antitoxin (TA) system, probably an RNase. Probably neutralized by cognate antitoxin AF_0948. Neutralization may be due to AMPylation by AF_0948. This is Putative RNase AF_0947 from Archaeoglobus fulgidus (strain ATCC 49558 / DSM 4304 / JCM 9628 / NBRC 100126 / VC-16).